The following is a 462-amino-acid chain: Coagulation factor IX (462 aa).

Positions 1-21 (MADAPGLIPIFLLGYLLSTEC) are cleaved as a signal peptide. Positions 22–39 (AVFLDRENATKILTRPKR) are excised as a propeptide. Positions 40, 41, 46, 47, 54, 56, 59, 60, 65, 66, and 69 each coordinate Ca(2+). The region spanning 40–86 (YNSGKLEEFVQGNLERECIEERCSFEEAREVFENTEKTTEFWKQYVD) is the Gla domain. A 4-carboxyglutamate mark is found at glutamate 46, glutamate 47, glutamate 54, glutamate 56, glutamate 59, glutamate 60, glutamate 65, glutamate 66, glutamate 69, glutamate 72, and glutamate 75. Glutamate 54 is a binding site for Mg(2+). An intrachain disulfide couples cysteine 57 to cysteine 62. Glutamate 59 lines the Mg(2+) pocket. Glutamate 65 is a Mg(2+) binding site. Glutamate 69 contributes to the Mg(2+) binding site. Glutamate 75 is a Ca(2+) binding site. Glutamate 75 lines the Mg(2+) pocket. Threonine 78 is a glycosylation site (O-linked (GalNAc...) threonine). Ca(2+) is bound by residues glutamate 79, aspartate 86, glycine 87, and glutamine 89. Position 79 is a 4-carboxyglutamate (glutamate 79). Glutamate 79 contributes to the Mg(2+) binding site. In terms of domain architecture, EGF-like; calcium-binding spans 86 to 122 (DGDQCESNPCLNGGICKDDINSYECWCQAGFEGRNCE). Cystine bridges form between cysteine 90/cysteine 101, cysteine 95/cysteine 110, cysteine 112/cysteine 121, cysteine 127/cysteine 138, cysteine 134/cysteine 148, cysteine 150/cysteine 163, cysteine 171/cysteine 336, cysteine 253/cysteine 269, cysteine 383/cysteine 397, and cysteine 408/cysteine 436. Serine 92 is a glycosylation site (O-linked (Glc...) serine). Positions 103 and 104 each coordinate Ca(2+). At aspartate 103 the chain carries (3R)-3-hydroxyaspartate. Serine 107 bears the Phosphoserine mark. Residues 186–227 (AETVFSNTDYGNSTELILDDITNSTILDNLTENSEPINDFTR) constitute a propeptide, activation peptide. Tyrosine 195 is subject to Sulfotyrosine. Phosphoserine is present on serine 198. Threonine 199 carries the post-translational modification Phosphothreonine; alternate. The O-linked (GalNAc...) threonine; alternate glycan is linked to threonine 199. Residues asparagine 208 and asparagine 214 are each glycosylated (N-linked (GlcNAc...) asparagine). Residues threonine 216 and threonine 226 are each glycosylated (O-linked (GalNAc...) threonine). Residues 228 to 460 (VVGGENAKPG…YVNWIKEKTK (233 aa)) enclose the Peptidase S1 domain. The active-site Charge relay system is histidine 268. Residues glutamate 282, asparagine 284, glutamate 287, glutamate 289, and glutamate 292 each coordinate Ca(2+). Asparagine 307 carries N-linked (GlcNAc...) asparagine glycosylation. Catalysis depends on aspartate 316, which acts as the Charge relay system. Serine 412 (charge relay system) is an active-site residue.

It belongs to the peptidase S1 family. Heterodimer of a light chain and a heavy chain; disulfide-linked. Interacts (inactive and activated) with F11 (activated) in calcium-dependent manner. Interacts with SERPINC1. Interacts (inactive and activated) with nitrophorin-2, an anticoagulant protein from Rhodnius prolixus. Activated by factor XIa, which excises the activation peptide. The propeptide can also be removed by snake venom protease. Activated by coagulation factor VIIa-tissue factor (F7-F3) complex in calcium-dependent manner. Post-translationally, the iron and 2-oxoglutarate dependent 3-hydroxylation of aspartate and asparagine is (R) stereospecific within EGF domains. In terms of processing, predominantly O-glucosylated at Ser-92 by POGLUT1 in vitro.

The protein resides in the secreted. It catalyses the reaction Selective cleavage of Arg-|-Ile bond in factor X to form factor Xa.. Functionally, factor IX is a vitamin K-dependent plasma protein that participates in the intrinsic pathway of blood coagulation by converting factor X to its active form in the presence of Ca(2+) ions, phospholipids, and factor VIIIa. This Rattus norvegicus (Rat) protein is Coagulation factor IX (F9).